The sequence spans 341 residues: Holliday junction branch migration complex subunit RuvB (341 aa).

Residues 3–184 (DDFDIRDARM…FGINMHLEYY (182 aa)) form a large ATPase domain (RuvB-L) region. Residues Leu-23, Arg-24, Gly-65, Lys-68, Thr-69, Thr-70, 131–133 (EDY), Arg-174, Tyr-184, and Arg-221 contribute to the ATP site. Thr-69 provides a ligand contact to Mg(2+). Residues 185–255 (DMETLTKIVL…IACFSLEALN (71 aa)) form a small ATPAse domain (RuvB-S) region. The interval 258-341 (RYGLDQIDNK…RVGEQGFLFD (84 aa)) is head domain (RuvB-H). Residues Arg-313 and Arg-318 each coordinate DNA.

It belongs to the RuvB family. Homohexamer. Forms an RuvA(8)-RuvB(12)-Holliday junction (HJ) complex. HJ DNA is sandwiched between 2 RuvA tetramers; dsDNA enters through RuvA and exits via RuvB. An RuvB hexamer assembles on each DNA strand where it exits the tetramer. Each RuvB hexamer is contacted by two RuvA subunits (via domain III) on 2 adjacent RuvB subunits; this complex drives branch migration. In the full resolvosome a probable DNA-RuvA(4)-RuvB(12)-RuvC(2) complex forms which resolves the HJ.

It localises to the cytoplasm. The catalysed reaction is ATP + H2O = ADP + phosphate + H(+). The RuvA-RuvB-RuvC complex processes Holliday junction (HJ) DNA during genetic recombination and DNA repair, while the RuvA-RuvB complex plays an important role in the rescue of blocked DNA replication forks via replication fork reversal (RFR). RuvA specifically binds to HJ cruciform DNA, conferring on it an open structure. The RuvB hexamer acts as an ATP-dependent pump, pulling dsDNA into and through the RuvAB complex. RuvB forms 2 homohexamers on either side of HJ DNA bound by 1 or 2 RuvA tetramers; 4 subunits per hexamer contact DNA at a time. Coordinated motions by a converter formed by DNA-disengaged RuvB subunits stimulates ATP hydrolysis and nucleotide exchange. Immobilization of the converter enables RuvB to convert the ATP-contained energy into a lever motion, pulling 2 nucleotides of DNA out of the RuvA tetramer per ATP hydrolyzed, thus driving DNA branch migration. The RuvB motors rotate together with the DNA substrate, which together with the progressing nucleotide cycle form the mechanistic basis for DNA recombination by continuous HJ branch migration. Branch migration allows RuvC to scan DNA until it finds its consensus sequence, where it cleaves and resolves cruciform DNA. The protein is Holliday junction branch migration complex subunit RuvB of Parabacteroides distasonis (strain ATCC 8503 / DSM 20701 / CIP 104284 / JCM 5825 / NCTC 11152).